The chain runs to 190 residues: Adenylate kinase (190 aa).

Residue 11-16 coordinates ATP; that stretch reads GSGKGT. Residues 31–60 are NMP; sequence STGDVLRGEMKAETELGKIAKDYIEKGQLV. AMP-binding positions include Thr-32, Arg-37, 58–60, 86–89, and Gln-93; these read QLV and GFPR. The segment at 127–137 is LID; the sequence is ERGKVSGRSDD. Arg-128 serves as a coordination point for ATP. Residues Arg-134 and Arg-145 each contribute to the AMP site. Gly-173 serves as a coordination point for ATP.

The protein belongs to the adenylate kinase family. As to quaternary structure, monomer.

It localises to the cytoplasm. It catalyses the reaction AMP + ATP = 2 ADP. Its pathway is purine metabolism; AMP biosynthesis via salvage pathway; AMP from ADP: step 1/1. Its function is as follows. Catalyzes the reversible transfer of the terminal phosphate group between ATP and AMP. Plays an important role in cellular energy homeostasis and in adenine nucleotide metabolism. The protein is Adenylate kinase of Parabacteroides distasonis (strain ATCC 8503 / DSM 20701 / CIP 104284 / JCM 5825 / NCTC 11152).